The chain runs to 444 residues: 23S rRNA (uracil(1939)-C(5))-methyltransferase RlmD (444 aa).

The TRAM domain maps to 5–67 (RNRFDRTPFQ…RHFDEAKTVE (63 aa)). The [4Fe-4S] cluster site is built by Cys-80, Cys-86, Cys-89, and Cys-168. Residues Gln-276, Phe-305, Asn-310, Glu-326, Asp-353, and Asp-374 each contribute to the S-adenosyl-L-methionine site. The Nucleophile role is filled by Cys-400.

Belongs to the class I-like SAM-binding methyltransferase superfamily. RNA M5U methyltransferase family. RlmD subfamily.

The catalysed reaction is uridine(1939) in 23S rRNA + S-adenosyl-L-methionine = 5-methyluridine(1939) in 23S rRNA + S-adenosyl-L-homocysteine + H(+). In terms of biological role, catalyzes the formation of 5-methyl-uridine at position 1939 (m5U1939) in 23S rRNA. This Xanthomonas oryzae pv. oryzae (strain MAFF 311018) protein is 23S rRNA (uracil(1939)-C(5))-methyltransferase RlmD.